The chain runs to 295 residues: Spermatogenesis-associated protein 4 (295 aa).

Positions 1–34 are disordered; the sequence is MAAAGQAEECLPLPAAESSKTSLPTPPAVPAGKK. Residues 48–154 form the Calponin-homology (CH) domain; it reads SRLSRSVLRW…QEIYTLLTHQ (107 aa). Residues 251–295 are disordered; it reads KRRYKSRGSKEKAAQPLSKSDNDGNARKEIHVKQSGNPCENTENL. Over residues 270–282 the composition is skewed to basic and acidic residues; that stretch reads SDNDGNARKEIHV. Residues 284–295 are compositionally biased toward polar residues; it reads QSGNPCENTENL.

As to expression, testis.

It localises to the nucleus. In terms of biological role, may play a role in apoptosis regulation. The polypeptide is Spermatogenesis-associated protein 4 (Spata4) (Mus musculus (Mouse)).